The primary structure comprises 688 residues: Translation initiation factor IF-2 (688 aa).

Composition is skewed to basic and acidic residues over residues 53-62 (GKEKSEKTKE) and 86-95 (KRDDKNEKVN). Positions 53–100 (GKEKSEKTKEEDDEIETTAKNPIKESMNNKKSNKRDDKNEKVNTENAE) are disordered. Residues 187-354 (KRSPIITVMG…MILLSSEILE (168 aa)) form the tr-type G domain. The tract at residues 196–203 (GHVDHGKT) is G1. 196–203 (GHVDHGKT) is a binding site for GTP. Positions 221-225 (GITQH) are G2. Positions 242-245 (DTPG) are G3. GTP-binding positions include 242-246 (DTPGH) and 296-299 (NKID). The tract at residues 296–299 (NKID) is G4. Residues 332-334 (SAH) are G5.

It belongs to the TRAFAC class translation factor GTPase superfamily. Classic translation factor GTPase family. IF-2 subfamily.

It is found in the cytoplasm. In terms of biological role, one of the essential components for the initiation of protein synthesis. Protects formylmethionyl-tRNA from spontaneous hydrolysis and promotes its binding to the 30S ribosomal subunits. Also involved in the hydrolysis of GTP during the formation of the 70S ribosomal complex. In Clostridium botulinum (strain Loch Maree / Type A3), this protein is Translation initiation factor IF-2.